Here is a 411-residue protein sequence, read N- to C-terminus: Probable G-protein coupled receptor AH9.1 (411 aa).

Residues 1 to 18 (MLLFLLRRIFDCRYKYKL) are Cytoplasmic-facing. Residues 19 to 39 (FVKALVLFLTIVYNAGLVHFF) form a helical membrane-spanning segment. The Extracellular segment spans residues 40–55 (FRTTSLDDSPEMNHVD). Residues 56 to 76 (YVAHVIVMPIVLSIGMINQCL) traverse the membrane as a helical segment. The Cytoplasmic portion of the chain corresponds to 77–87 (NVCTLLHIRTS). Residues 88–108 (IFLYLKASAIADILSIVAFIP) traverse the membrane as a helical segment. Over 109-131 (FLFRHAKLIDPSWELGMFYHAHL) the chain is Extracellular. A helical membrane pass occupies residues 132-152 (ELPLINALISASALNIVAMTV). At 153 to 176 (DRYVSVCHPIKFFQNNETKPSRRR) the chain is on the cytoplasmic side. A helical membrane pass occupies residues 177–197 (TMLIIVMIYFIALMIYFPSVF). At 198–229 (QKKLGVVTDALTNKTIYTIVRNEDVEALQVFK) the chain is on the extracellular side. A glycan (N-linked (GlcNAc...) asparagine) is linked at asparagine 210. The helical transmembrane segment at 230–250 (FYLIVRECICRWGPVLLLVIL) threads the bilayer. Residues 251–299 (NMCVVRGLRKIDKRNWFWRQPSQNSRTETLAQRQLRSPRDDRSRISVLL) are Cytoplasmic-facing. A helical transmembrane segment spans residues 300 to 320 (FVTSATFIICNIPASVISFFV). Residues 321–333 (RRVSGSLFWQIFR) lie on the Extracellular side of the membrane. Residues 334–354 (AIANLLQVTSYLYNFYLYALC) form a helical membrane-spanning segment. Residues 355-411 (SSEYRHAFLRLFGCRSSLSPTSTGDSPTVRVSVHGKRCHQAVVLLGNENHENPVDEV) are Cytoplasmic-facing.

This sequence belongs to the G-protein coupled receptor 1 family.

It is found in the cell membrane. Not known. Putative receptor. The chain is Probable G-protein coupled receptor AH9.1 from Caenorhabditis elegans.